A 332-amino-acid chain; its full sequence is Probable endo-beta-1,4-glucanase B (332 aa).

An N-terminal signal peptide occupies residues 1 to 18 (MKFQSTLLLAAAAGSALA). 2 N-linked (GlcNAc...) asparagine glycosylation sites follow: asparagine 38 and asparagine 100. Catalysis depends on glutamate 160, which acts as the Proton donor. Asparagine 212 is a glycosylation site (N-linked (GlcNAc...) asparagine). The Nucleophile role is filled by glutamate 267. An N-linked (GlcNAc...) asparagine glycan is attached at asparagine 289.

Belongs to the glycosyl hydrolase 5 (cellulase A) family.

Its subcellular location is the secreted. The catalysed reaction is Endohydrolysis of (1-&gt;4)-beta-D-glucosidic linkages in cellulose, lichenin and cereal beta-D-glucans.. Functionally, has endoglucanase activity on substrates containing beta-1,4 glycosidic bonds, like in carboxymethylcellulose (CMC), hydroxyethylcellulose (HEC) and beta-glucan. Involved in the degradation of complex natural cellulosic substrates. This chain is Probable endo-beta-1,4-glucanase B (eglB), found in Aspergillus kawachii (strain NBRC 4308) (White koji mold).